A 361-amino-acid chain; its full sequence is F-box protein pof7 (361 aa).

The F-box domain occupies 105-157; sequence NESVVPNILKLPDEVLLVILENCIRDLHDLRYLSSIALTCKHFAKALRADSLY.

As to quaternary structure, interacts with skp1.

The protein resides in the cytoplasm. This Schizosaccharomyces pombe (strain 972 / ATCC 24843) (Fission yeast) protein is F-box protein pof7 (pof7).